Here is a 197-residue protein sequence, read N- to C-terminus: Na(+)-translocating NADH-quinone reductase subunit E (197 aa).

A run of 6 helical transmembrane segments spans residues 11-31 (SVFIENMALSFFLGMCTFLAV), 35-55 (VSTAFGLGVAVIFVLGLSVPV), 76-96 (FLKFITFIGVIAALVQILEMF), 108-128 (LGIYLPLITVNCAIFGAVSFM), 139-159 (VVYGFGAGLGWMLAIVALAGI), and 175-195 (LGITFIAAGLMAMAFMSFSGI).

This sequence belongs to the NqrDE/RnfAE family. Composed of six subunits; NqrA, NqrB, NqrC, NqrD, NqrE and NqrF.

The protein localises to the cell inner membrane. It carries out the reaction a ubiquinone + n Na(+)(in) + NADH + H(+) = a ubiquinol + n Na(+)(out) + NAD(+). NQR complex catalyzes the reduction of ubiquinone-1 to ubiquinol by two successive reactions, coupled with the transport of Na(+) ions from the cytoplasm to the periplasm. NqrA to NqrE are probably involved in the second step, the conversion of ubisemiquinone to ubiquinol. The sequence is that of Na(+)-translocating NADH-quinone reductase subunit E from Neisseria meningitidis serogroup B (strain ATCC BAA-335 / MC58).